Here is a 488-residue protein sequence, read N- to C-terminus: SAGA complex subunit HFI1 (488 aa).

Disordered regions lie at residues 1-58 and 352-383; these read MSAI…QGPN and QLDD…IGDI. Residues 37–58 show a composition bias toward polar residues; the sequence is AVSNHTEPNNGNNETAEPQGPN.

As to quaternary structure, component of the 1.8 MDa SAGA (Spt-Ada-Gcn5 acetyltransferase) complex, which is composed of 19 subunits TRA1, SPT7, TAF5, NGG1/ADA3, SGF73, SPT20/ADA5, SPT8, TAF12, TAF6, HFI1/ADA1, UBP8, GCN5, ADA2, SPT3, SGF29, TAF10, TAF9, SGF11 and SUS1. The SAGA complex is composed of 4 modules, namely the HAT (histone acetyltransferase) module (GCN5, ADA2, NGG1/ADA3 and SGF29), the DUB (deubiquitinating) module (UBP8, SGF11, SGF73 and SUS1), the core or TAF (TBP-associated factor) module (TAF5, TAF6, TAF9, TAF10 and TAF12), and the Tra1 or SPT (Suppressor of Ty) module (TRA1, HFI1/ADA1, SPT3, SPT7, SPT8 and SPT20/ADA5). The Tra1/SPT module binds activators, the core module recruits TBP (TATA-binding protein), the HAT module contains the histone H3 acetyltransferase GCN5, and the DUB module comprises the histone H2B deubiquitinase UBP8. Also identified in an altered form of SAGA, named SALSA (SAGA altered, Spt8 absent) or SLIK (SAGA-like) complex, which contains a C-terminal truncated form of SPT7 and is missing SPT8. However, it has been shown that the SAGA and SAGA-like SALSA/SLIK transcriptional coactivators are structurally and biochemically equivalent. Component of an ADA/GCN5 complex that consists of HFI1/ADA1, ADA2, NGG1/ADA3, SPT20/ADA5 and GCN5 and probably is a subcomplex of SAGA.

It localises to the nucleus. Its function is as follows. Component of the transcription coactivator SAGA complex. SAGA acts as a general cofactor required for essentially all RNA polymerase II transcription. At the promoters, SAGA is required for transcription pre-initiation complex (PIC) recruitment. It influences RNA polymerase II transcriptional activity through different activities such as TBP interaction (via core/TAF module) and promoter selectivity, interaction with transcription activators (via Tra1/SPT module), and chromatin modification through histone acetylation (via HAT module) and deubiquitination (via DUB module). SAGA preferentially acetylates histones H3 (to form H3K9ac, H3K14ac, H3K18ac and H3K23ac) and H2B and deubiquitinates histone H2B. SAGA interacts with DNA via upstream activating sequences (UASs). Also identified in a modified version of SAGA named SALSA or SLIK. The cleavage of SPT7 and the absence of the SPT8 subunit in SLIK neither drive any major conformational differences in its structure compared with SAGA, nor significantly affect HAT, DUB, or DNA-binding activities. This is SAGA complex subunit HFI1 (HFI1) from Saccharomyces cerevisiae (strain ATCC 204508 / S288c) (Baker's yeast).